The primary structure comprises 450 residues: ATP-dependent protease ATPase subunit HslU (450 aa).

Residues Val-29, 71–76 (GVGKTE), Asp-261, Glu-328, and Arg-400 each bind ATP.

The protein belongs to the ClpX chaperone family. HslU subfamily. A double ring-shaped homohexamer of HslV is capped on each side by a ring-shaped HslU homohexamer. The assembly of the HslU/HslV complex is dependent on binding of ATP.

It is found in the cytoplasm. Functionally, ATPase subunit of a proteasome-like degradation complex; this subunit has chaperone activity. The binding of ATP and its subsequent hydrolysis by HslU are essential for unfolding of protein substrates subsequently hydrolyzed by HslV. HslU recognizes the N-terminal part of its protein substrates and unfolds these before they are guided to HslV for hydrolysis. The polypeptide is ATP-dependent protease ATPase subunit HslU (Rickettsia canadensis (strain McKiel)).